Reading from the N-terminus, the 130-residue chain is Small ribosomal subunit protein uS9 (130 aa).

It belongs to the universal ribosomal protein uS9 family.

The protein is Small ribosomal subunit protein uS9 (rpsI) of Haemophilus influenzae (strain ATCC 51907 / DSM 11121 / KW20 / Rd).